The sequence spans 443 residues: UDP-N-acetylmuramoylalanine--D-glutamate ligase (443 aa).

Residue 116 to 122 (GTNGKST) coordinates ATP.

It belongs to the MurCDEF family.

Its subcellular location is the cytoplasm. It catalyses the reaction UDP-N-acetyl-alpha-D-muramoyl-L-alanine + D-glutamate + ATP = UDP-N-acetyl-alpha-D-muramoyl-L-alanyl-D-glutamate + ADP + phosphate + H(+). The protein operates within cell wall biogenesis; peptidoglycan biosynthesis. Functionally, cell wall formation. Catalyzes the addition of glutamate to the nucleotide precursor UDP-N-acetylmuramoyl-L-alanine (UMA). This Novosphingobium aromaticivorans (strain ATCC 700278 / DSM 12444 / CCUG 56034 / CIP 105152 / NBRC 16084 / F199) protein is UDP-N-acetylmuramoylalanine--D-glutamate ligase.